A 552-amino-acid chain; its full sequence is Formate--tetrahydrofolate ligase (552 aa).

63 to 70 (TPFGEGKT) is a binding site for ATP.

It belongs to the formate--tetrahydrofolate ligase family.

It carries out the reaction (6S)-5,6,7,8-tetrahydrofolate + formate + ATP = (6R)-10-formyltetrahydrofolate + ADP + phosphate. It participates in one-carbon metabolism; tetrahydrofolate interconversion. This chain is Formate--tetrahydrofolate ligase, found in Caldicellulosiruptor bescii (strain ATCC BAA-1888 / DSM 6725 / KCTC 15123 / Z-1320) (Anaerocellum thermophilum).